Here is a 110-residue protein sequence, read N- to C-terminus: ATP-dependent Clp protease adapter protein ClpS (110 aa).

A compositionally biased stretch (basic and acidic residues) spans 1-10 (MSDDRRRGDE). The interval 1-27 (MSDDRRRGDEDGGAGTGVITKTKPKTK) is disordered.

This sequence belongs to the ClpS family. Binds to the N-terminal domain of the chaperone ClpA.

Involved in the modulation of the specificity of the ClpAP-mediated ATP-dependent protein degradation. The polypeptide is ATP-dependent Clp protease adapter protein ClpS (Parvibaculum lavamentivorans (strain DS-1 / DSM 13023 / NCIMB 13966)).